The following is a 192-amino-acid chain: Thymidine kinase (192 aa).

ATP contacts are provided by residues 9 to 16 (SAMNAGKT) and 88 to 91 (DECH). Glutamate 89 acts as the Proton acceptor in catalysis. Zn(2+) is bound by residues cysteine 146, cysteine 148, cysteine 183, and histidine 186.

The protein belongs to the thymidine kinase family. Homotetramer.

The protein localises to the cytoplasm. It carries out the reaction thymidine + ATP = dTMP + ADP + H(+). In Blochmanniella floridana, this protein is Thymidine kinase.